Consider the following 110-residue polypeptide: Large ribosomal subunit protein uL22 (110 aa).

The segment covering 84 to 95 (ARGTASKIRKPT) has biased composition (basic residues). Positions 84–110 (ARGTASKIRKPTSHVMVEVSKPEKKEA) are disordered.

The protein belongs to the universal ribosomal protein uL22 family. Part of the 50S ribosomal subunit.

Its function is as follows. This protein binds specifically to 23S rRNA; its binding is stimulated by other ribosomal proteins, e.g. L4, L17, and L20. It is important during the early stages of 50S assembly. It makes multiple contacts with different domains of the 23S rRNA in the assembled 50S subunit and ribosome. The globular domain of the protein is located near the polypeptide exit tunnel on the outside of the subunit, while an extended beta-hairpin is found that lines the wall of the exit tunnel in the center of the 70S ribosome. The sequence is that of Large ribosomal subunit protein uL22 from Campylobacter concisus (strain 13826).